Here is a 219-residue protein sequence, read N- to C-terminus: Histone H1.4 (219 aa).

Residues 1–15 (MSETAPAAPAAPAPA) show a composition bias toward low complexity. The interval 1 to 41 (MSETAPAAPAAPAPAEKTPVKKKARKSAGAAKRKASGPPVS) is disordered. Ser2 carries the post-translational modification N-acetylserine. At Ser2 the chain carries Phosphoserine. An N6-acetyllysine modification is found at Lys17. The residue at position 18 (Thr18) is a Phosphothreonine. Positions 20 to 35 (VKKKARKSAGAAKRKA) are enriched in basic residues. Residue Lys26 is modified to N6-acetyllysine; alternate. Lys26 carries the N6-methyllysine; alternate modification. Lys34 is modified (N6-(beta-hydroxybutyryl)lysine; alternate). At Lys34 the chain carries N6-succinyllysine; alternate. A Phosphoserine modification is found at Ser36. The H15 domain occupies 36-109 (SGPPVSELIT…GASGSFKLNK (74 aa)). Position 52 is an N6-(beta-hydroxybutyryl)lysine (Lys52). A Citrulline modification is found at Arg54. Lys64, Lys85, Lys90, and Lys106 each carry N6-(beta-hydroxybutyryl)lysine. The disordered stretch occupies residues 92 to 219 (TLVQTKGTGA…KPKKAAAKKK (128 aa)). Residues 119–140 (KAKKAGAAKAKKPAGAAKKPKK) show a composition bias toward basic residues. Thr146 bears the Phosphothreonine mark. Basic residues-rich tracts occupy residues 149-160 (KSAKKTPKKAKK) and 168-185 (KKAKSPKKAKAAKPKKAP). Ser150 carries the post-translational modification ADP-ribosylserine. Ser187 carries the post-translational modification Phosphoserine. The segment covering 192–219 (KAVKPKAAKPKTAKPKAAKPKKAAAKKK) has biased composition (basic residues).

The protein belongs to the histone H1/H5 family. Post-translationally, H1 histones are progressively phosphorylated during the cell cycle, becoming maximally phosphorylated during late G2 phase and M phase, and being dephosphorylated sharply thereafter. Acetylated at Lys-26. Deacetylated at Lys-26 by SIRT1. In terms of processing, citrullination at Arg-54 (H1R54ci) by PADI4 takes place within the DNA-binding site of H1 and results in its displacement from chromatin and global chromatin decondensation, thereby promoting pluripotency and stem cell maintenance. Post-translationally, ADP-ribosylated on Ser-150 in response to DNA damage.

Its subcellular location is the nucleus. The protein resides in the chromosome. Its function is as follows. Histone H1 protein binds to linker DNA between nucleosomes forming the macromolecular structure known as the chromatin fiber. Histones H1 are necessary for the condensation of nucleosome chains into higher-order structured fibers. Also acts as a regulator of individual gene transcription through chromatin remodeling, nucleosome spacing and DNA methylation. The polypeptide is Histone H1.4 (Homo sapiens (Human)).